We begin with the raw amino-acid sequence, 91 residues long: Small ribosomal subunit protein uS15 (91 aa).

It belongs to the universal ribosomal protein uS15 family. Part of the 30S ribosomal subunit. Forms a bridge to the 50S subunit in the 70S ribosome, contacting the 23S rRNA.

Functionally, one of the primary rRNA binding proteins, it binds directly to 16S rRNA where it helps nucleate assembly of the platform of the 30S subunit by binding and bridging several RNA helices of the 16S rRNA. Its function is as follows. Forms an intersubunit bridge (bridge B4) with the 23S rRNA of the 50S subunit in the ribosome. This is Small ribosomal subunit protein uS15 from Rickettsia prowazekii (strain Madrid E).